The primary structure comprises 428 residues: L-glutamyl-[BtrI acyl-carrier protein] decarboxylase (428 aa).

Residue lysine 49 is modified to N6-(pyridoxal phosphate)lysine. Pyridoxal 5'-phosphate-binding positions include glycine 228, 269-272, and tyrosine 375; that span reads ESGR. 2 residues coordinate substrate: arginine 272 and tyrosine 375.

The protein belongs to the Orn/Lys/Arg decarboxylase class-II family. Homodimer. Requires pyridoxal 5'-phosphate as cofactor.

The enzyme catalyses gamma-L-glutamyl-[BtrI ACP] + H(+) = 4-aminobutanoyl-[BtrI ACP] + CO2. Its pathway is antibiotic biosynthesis; butirosin biosynthesis. Pyridoxal phosphate-dependent decarboxylase that catalyzes 1 step in the biosynthesis of the side chain of the aminoglycoside antibiotics in the biosynthetic pathway of butirosin. Able to decarboxylate L-ornithine, L-arginine, L-lysine, but not L-glutamate or any D-amino acids. Has low activity with substrates not bound to an acyl-carrier protein. This is L-glutamyl-[BtrI acyl-carrier protein] decarboxylase (btrK) from Niallia circulans (Bacillus circulans).